The following is a 308-amino-acid chain: MPERTMVRVDEKQLPRWTRWLDLGDRLLAVLLLAPAAILLSLIIVYPVARLVYTSFFSLSLTSGLPAEFIGFENYTAMFDDPIFWETTWNTVLITLITVPGALFMGLGLALLANLPFSMQWPMRLSLLIPWALPLSFAGLIFAWFFHYEYGVVNDVLNRLGFEGIIWFNSPNWAFAAICLTIIWKTSSFMALMILAGLQTIPRSLYEAADVDGAGKIRRFFEITLPLLKPSIVVALIFRTITALQTFDIPYMMTGGGPGTSTTTLAMYIHQNTVSFLDLGYGSALAVVMFALSMCVTAVYLRIIRTKD.

6 helical membrane-spanning segments follow: residues leucine 28–valine 48, valine 92–leucine 112, serine 126–phenylalanine 146, glycine 164–tryptophan 184, isoleucine 223–alanine 243, and leucine 279–valine 299. The 213-residue stretch at threonine 88–tyrosine 300 folds into the ABC transmembrane type-1 domain.

It belongs to the binding-protein-dependent transport system permease family. As to quaternary structure, the complex is probably composed of two ATP-binding proteins (SmoE), two transmembrane proteins (SmoG and SmoH) and a solute-binding protein (SmoF).

Its subcellular location is the cell inner membrane. Its function is as follows. Part of the ABC transporter complex SmoEFGH involved in sulfoquinovosyl glycerol (SQGro) uptake. Responsible for the translocation of the substrate across the membrane. In Agrobacterium fabrum (strain C58 / ATCC 33970) (Agrobacterium tumefaciens (strain C58)), this protein is Sulfoquinovosyl glycerol transport system permease protein SmoG.